The chain runs to 193 residues: C-type lectin domain family 3 member A homolog (193 aa).

The N-terminal stretch at 1 to 24 is a signal peptide; the sequence is MAQAGLLIWLFFTILLLDLTCTQS. Disulfide bonds link cysteine 66-cysteine 76, cysteine 93-cysteine 188, and cysteine 164-cysteine 180. A C-type lectin domain is found at 72–189; that stretch reads IHKKCYLSFE…CRSLKKYICE (118 aa).

It localises to the secreted. This chain is C-type lectin domain family 3 member A homolog (clec3a), found in Xenopus laevis (African clawed frog).